A 103-amino-acid chain; its full sequence is Co-chaperonin GroES (103 aa).

It belongs to the GroES chaperonin family. As to quaternary structure, heptamer of 7 subunits arranged in a ring. Interacts with the chaperonin GroEL.

Its subcellular location is the cytoplasm. Together with the chaperonin GroEL, plays an essential role in assisting protein folding. The GroEL-GroES system forms a nano-cage that allows encapsulation of the non-native substrate proteins and provides a physical environment optimized to promote and accelerate protein folding. GroES binds to the apical surface of the GroEL ring, thereby capping the opening of the GroEL channel. This Thermosynechococcus vestitus (strain NIES-2133 / IAM M-273 / BP-1) protein is Co-chaperonin GroES.